The primary structure comprises 376 residues: Transmembrane protein 43 homolog (376 aa).

The Cytoplasmic portion of the chain corresponds to 1 to 10 (MASLSETLRS). A helical membrane pass occupies residues 11–31 (HWPIALFGVILFVAGGTELYW). The Lumenal segment spans residues 32-277 (NEGRAVHNMM…EVFRLEARAQ (246 aa)). The helical transmembrane segment at 278-298 (VLHTWWWRFVGWLLIFFGVTC) threads the bilayer. Over 299–323 (NTKILRLLFVRVPLLVALAPDPQFP) the chain is Cytoplasmic. The next 2 helical transmembrane spans lie at 324 to 344 (VTGN…VAWI) and 345 to 365 (LHRP…YVWF). The Cytoplasmic portion of the chain corresponds to 366 to 376 (TRNLVDYHRLD).

Belongs to the TMEM43 family.

Its subcellular location is the endoplasmic reticulum membrane. The protein localises to the nucleus envelope. In terms of biological role, involved in lipid metabolism and utilization. The sequence is that of Transmembrane protein 43 homolog from Drosophila melanogaster (Fruit fly).